An 865-amino-acid polypeptide reads, in one-letter code: NBPF family member NBPF11 (865 aa).

A coiled-coil region spans residues 70–130 (MLRNERQFKE…RSLNEHLQAL (61 aa)). A disordered region spans residues 161-200 (KLSPENDEDEDEDVQVEEDEKVLESSAPREVQKAEESKVP). Positions 165–181 (ENDEDEDEDVQVEEDEK) are enriched in acidic residues. The Olduvai 1 domain occupies 165-259 (ENDEDEDEDV…GCQDALNILP (95 aa)). Residues 190-200 (EVQKAEESKVP) show a composition bias toward basic and acidic residues. The stretch at 339 to 401 (KSMLRNERQF…RSLNEHLQAL (63 aa)) forms a coiled coil. Olduvai domains lie at 436–528 (ENDN…HIIP), 529–617 (ENES…ATGP), 620–675 (SREL…VDMD), 676–767 (EIEK…PPCP), and 770–865 (SREL…SAAC). Disordered stretches follow at residues 450–475 (AEKVQKSSSPREMQKAEEKEVPEDSL) and 520–567 (WEDA…GYST). Composition is skewed to acidic residues over residues 530–539 (NESDDEEEEE) and 550–562 (ESEEEEVPQESWD). Residues 829-865 (RGRGRKEGEEDQRRKEEGEEKKGKKIKTHHAPGSAAC) are disordered. Residues 833 to 850 (RKEGEEDQRRKEEGEEKK) show a composition bias toward basic and acidic residues.

It belongs to the NBPF family. As to expression, expressed in spinal cord.

It is found in the cytoplasm. In Homo sapiens (Human), this protein is NBPF family member NBPF11.